The primary structure comprises 266 residues: Putative carbamate hydrolase RutD (266 aa).

Belongs to the AB hydrolase superfamily. Hydrolase RutD family.

The enzyme catalyses carbamate + 2 H(+) = NH4(+) + CO2. Its function is as follows. Involved in pyrimidine catabolism. May facilitate the hydrolysis of carbamate, a reaction that can also occur spontaneously. In Escherichia coli O139:H28 (strain E24377A / ETEC), this protein is Putative carbamate hydrolase RutD.